The chain runs to 296 residues: Cyclin-dependent kinase 1 (296 aa).

In terms of domain architecture, Protein kinase spans 10–288; that stretch reads YQKLEKLGEG…AKEALLHPYF (279 aa). Residues 16–24 and Lys-39 contribute to the ATP site; that span reads LGEGTYGKV. Position 20 is a phosphothreonine (Thr-20). The residue at position 21 (Tyr-21) is a Phosphotyrosine. Asp-129 functions as the Proton acceptor in the catalytic mechanism. Residue Thr-162 is modified to Phosphothreonine; by CAK.

This sequence belongs to the protein kinase superfamily. CMGC Ser/Thr protein kinase family. CDC2/CDKX subfamily. Forms a stable but non-covalent complex with a regulatory subunit and with a cyclin.

The catalysed reaction is L-seryl-[protein] + ATP = O-phospho-L-seryl-[protein] + ADP + H(+). It catalyses the reaction L-threonyl-[protein] + ATP = O-phospho-L-threonyl-[protein] + ADP + H(+). It carries out the reaction [DNA-directed RNA polymerase] + ATP = phospho-[DNA-directed RNA polymerase] + ADP + H(+). Phosphorylation at Thr-20 or Tyr-21 inactivates the enzyme, while phosphorylation at Thr-162 activates it. Functionally, plays a key role in the control of the eukaryotic cell cycle. Required for entry into S-phase and mitosis. p34 is a component of the kinase complex that phosphorylates the repetitive C-terminus of RNA polymerase II. The polypeptide is Cyclin-dependent kinase 1 (cdk1) (Dictyostelium discoideum (Social amoeba)).